Here is a 610-residue protein sequence, read N- to C-terminus: Menin (610 aa).

The tract at residues 214–390 is interaction with FANCD2; the sequence is GVAERSWLYL…SLLEAGEERP (177 aa). The disordered stretch occupies residues 460-552; the sequence is REAEAAEAEE…SPPPEGPVLT (93 aa). Over residues 484–500 the composition is skewed to basic and acidic residues; the sequence is RRESKPEEPPPPKKPAL. 2 positions are modified to phosphoserine: Ser-487 and Ser-543. A Phosphothreonine modification is found at Thr-594.

Component of the MLL-HCF complex, at least composed of KMT2A/MLL1, MEN1, ASH2L, RBBP5, DPY30, WDR5, HCFC1 and HCFC2. Component of the menin-associated histone methyltransferase complex, at least composed of KMT2B/MLL4, MEN1, ASH2L, RBBP5, DPY30 and WDR5. Interacts with POLR2B. Interacts with POLR2A phosphorylated at 'Ser-5', but not with the unphosphorylated, nor 'Ser-2' phosphorylated POLR2A forms. Interacts with FANCD2 and DBF4. Interacts with SMAD3, but not with SMAD2, nor SMAD4. Directly interacts with NFKB1, NFKB2 and RELA. Interacts with JUND (via MBM motif); inhibits the interaction of JUND with MAPK10 and the phosphorylation of JUND by MAP kinases MAPK8 and MAPK10. Interacts with KMT2A (via MBM motif). The KMT2A-MEN1 complex interacts with PSIP1 with a greater affinity as MEN1 enhances interaction of KMT2A with PSIP1. As to expression, widely expressed, including in the pituitary, brain, large intestine, spleen, kidney, adrenal gland, ovary, testis, thymus, lung, epididymis, bone marrow, pancreatic islets and placenta.

It localises to the nucleus. In terms of biological role, essential component of a MLL/SET1 histone methyltransferase (HMT) complex, a complex that specifically methylates 'Lys-4' of histone H3 (H3K4). Functions as a transcriptional regulator. Binds to the TERT promoter and represses telomerase expression. Represses JUND-mediated transcriptional activation on AP1 sites, as well as that mediated by NFKB subunit RELA. Positively regulates HOXC8 and HOXC6 gene expression. May be involved in normal hematopoiesis through the activation of HOXA9 expression. May be involved in DNA repair. Plays a role in TGFB1-mediated inhibition of cell-proliferation, possibly regulating SMAD3 transcriptional activity. In Rattus norvegicus (Rat), this protein is Menin (Men1).